The chain runs to 435 residues: 3-ketoacyl-CoA thiolase (435 aa).

The Acyl-thioester intermediate role is filled by Cys-98. Catalysis depends on proton acceptor residues His-391 and Cys-421.

Belongs to the thiolase-like superfamily. Thiolase family. Heterotetramer of two alpha chains (FadJ) and two beta chains (FadI).

The protein localises to the cytoplasm. The catalysed reaction is an acyl-CoA + acetyl-CoA = a 3-oxoacyl-CoA + CoA. Its pathway is lipid metabolism; fatty acid beta-oxidation. In terms of biological role, catalyzes the final step of fatty acid oxidation in which acetyl-CoA is released and the CoA ester of a fatty acid two carbons shorter is formed. This is 3-ketoacyl-CoA thiolase from Vibrio cholerae serotype O1 (strain ATCC 39541 / Classical Ogawa 395 / O395).